The following is a 1146-amino-acid chain: Lysine-specific demethylase 2A (1146 aa).

A JmjC domain is found at Phe-146–Asp-314. Thr-207 contacts substrate. The Fe cation site is built by His-210 and Asp-212. Substrate is bound at residue Lys-227. Position 282 (His-282) interacts with Fe cation. 2 disordered regions span residues Leu-363–Pro-467 and Thr-554–Ala-585. Low complexity predominate over residues Ser-373 to Ser-387. Over residues Asp-388–Glu-401 the composition is skewed to acidic residues. The span at Gly-402–Ile-442 shows a compositional bias: basic and acidic residues. Residues Leu-453–Pro-467 show a composition bias toward pro residues. Over residues Ser-566–Gly-584 the composition is skewed to low complexity. The CXXC-type zinc-finger motif lies at Ala-585–Leu-631. The Zn(2+) site is built by Cys-592, Cys-595, Cys-598, Cys-603, Cys-606, Cys-609, Cys-625, and Cys-630. Residues Ser-638 to Gly-699 form a PHD-type zinc finger. Disordered regions lie at residues Val-733–Arg-800 and Thr-832–Met-867. The span at Gly-739–Pro-762 shows a compositional bias: pro residues. Residues Ser-772–His-789 show a composition bias toward basic and acidic residues. Acidic residues predominate over residues Glu-849 to Glu-864. The region spanning Ser-874 to Val-919 is the F-box domain. LRR repeat units follow at residues Trp-945–Leu-966, Leu-968–Trp-994, Gly-1032–His-1057, Cys-1058–Gly-1087, Cys-1088–Gly-1112, and Cys-1113–Asp-1138.

This sequence belongs to the JHDM1 histone demethylase family. The cofactor is Fe(2+).

Its subcellular location is the nucleus. It is found in the nucleoplasm. The enzyme catalyses N(6),N(6)-dimethyl-L-lysyl(36)-[histone H3] + 2 2-oxoglutarate + 2 O2 = L-lysyl(36)-[histone H3] + 2 formaldehyde + 2 succinate + 2 CO2. Histone demethylase that specifically demethylates 'Lys-36' of histone H3, thereby playing a central role in histone code. Preferentially demethylates dimethylated H3 'Lys-36' residue while it has weak or no activity for mono- and tri-methylated H3 'Lys-36'. May also recognize and bind to some phosphorylated proteins and promote their ubiquitination and degradation. Required to maintain the heterochromatic state. Associates with centromeres and represses transcription of small non-coding RNAs that are encoded by the clusters of satellite repeats at the centromere. Required to sustain centromeric integrity and genomic stability, particularly during mitosis. May play a role in the regulation of circadian gene expression. In Xenopus tropicalis (Western clawed frog), this protein is Lysine-specific demethylase 2A (kdm2a).